The sequence spans 459 residues: Transcription factor 7-like 2 (459 aa).

Over residues 1 to 11 the composition is skewed to gly residues; it reads MPQLNGGGGDD. A CTNNB1-binding region spans residues 1–53; the sequence is MPQLNGGGGDDLGANDELISFKDEGEQEEKNSENSSAERDLADVKSSLVNESE. A disordered region spans residues 1-96; the sequence is MPQLNGGGGD…AKRQDGGLFK (96 aa). The segment covering 19–43 has biased composition (basic and acidic residues); it reads ISFKDEGEQEEKNSENSSAERDLAD. A Glycyl lysine isopeptide (Lys-Gly) (interchain with G-Cter in SUMO2) cross-link involves residue Lys-22. Over residues 47–56 the composition is skewed to polar residues; that stretch reads SLVNESETNQ. The segment covering 63–91 has biased composition (basic and acidic residues); the sequence is EAERRPPPRSESFRDKSRESLEEAAKRQD. A phosphothreonine; by NLK mark is found at Thr-178 and Thr-189. The mediates interaction with MAD2L2 stretch occupies residues 178–372; sequence TPLITYSNEH…RRWHALSREE (195 aa). A compositionally biased stretch (polar residues) spans 295–305; that stretch reads TVKQESSQSDV. 2 disordered regions span residues 295–327 and 397–418; these read TVKQ…KPHI and RDNY…TNEH. A Glycyl lysine isopeptide (Lys-Gly) (interchain with G-Cter in SUMO) cross-link involves residue Lys-297. Residues 312 to 323 are compositionally biased toward basic and acidic residues; the sequence is KHQDSKKEEEKK. The segment at residues 327-395 is a DNA-binding region (HMG box); that stretch reads IKKPLNAFML…LHMQLYPGWS (69 aa). The Nuclear localization signal signature appears at 402–408; sequence KKKKRKR.

Belongs to the TCF/LEF family. Interacts with TGFB1I1. Interacts with SPIN1. Interacts with CTNNB1 (via the armadillo repeat); forms stable transcription complex. Interacts with EP300. Interacts with NLK. Interacts with CCDC85B (probably through the HMG box); prevents interaction with CTNNB1. Interacts with TNIK. Interacts with MAD2L2; prevents TCF7L2/TCF4 binding to promZIPK/DAPK3oters, negatively modulating its transcriptional activity. Interacts with ZIPK/DAPK3. Interacts with XIAP/BIRC4 and TLE3. Interacts with DDIT3/CHOP. The CTNNB1 and TCF7L2/TCF4 complex interacts with PML (isoform PML-4). Identified in a complex with CTNNB1 and FERMT2. Interacts with C11orf84/SPINDOC in a SPIN1-dependent manner. Interacts with DAZAP2; the interaction results in localization of DAZAP2 to the nucleus. In terms of processing, phosphorylated at Thr-178 and/or Thr-189 by NLK. Phosphorylation by NLK at these sites inhibits DNA-binding by TCF7L2/TCF4, thereby preventing transcriptional activation of target genes of the canonical Wnt/beta-catenin signaling pathway. Polysumoylated. Sumoylation is enhanced by PIAS family members and desumoylation is enhanced by SENP2. Sumoylation/desumoylation regulates TCF7L2/TCF4 transcription activity in the Wnt/beta-catenin signaling pathway without altering interaction with CTNNB1 nor binding to DNA. In terms of tissue distribution, detected in adult brain and liver, and at lower levels in intestine, with a clear increase from the distal colon to the duodenum. Detected at low levels in heart, lung, kidney, pituitary and testis.

The protein resides in the nucleus. It localises to the PML body. In terms of biological role, participates in the Wnt signaling pathway and modulates MYC expression by binding to its promoter in a sequence-specific manner. Acts as a repressor in the absence of CTNNB1, and as activator in its presence. Activates transcription from promoters with several copies of the Tcf motif CCTTTGATC in the presence of CTNNB1. TLE1, TLE2, TLE3 and TLE4 repress transactivation mediated by TCF7L2/TCF4 and CTNNB1. Expression of dominant-negative mutants results in cell-cycle arrest in G1. Necessary for the maintenance of the epithelial stem-cell compartment of the small intestine. The protein is Transcription factor 7-like 2 (Tcf7l2) of Mus musculus (Mouse).